Reading from the N-terminus, the 647-residue chain is Protein FAM161A (647 aa).

2 disordered regions span residues 32–55 (RELG…TSME) and 143–175 (PAQH…GDSE). Over residues 152-161 (SRSVSPSLAE) the composition is skewed to polar residues. Coiled-coil stretches lie at residues 243–268 (IKSK…ECQK) and 518–544 (AIRK…VLNK). 2 disordered regions span residues 504–524 (QTPR…KREK) and 588–647 (DEHV…IEEI). 2 stretches are compositionally biased toward basic and acidic residues: residues 510–524 (ESSK…KREK) and 588–600 (DEHV…KKIP). The span at 613–638 (DLLDDEEDDKYDCESEEAEEEDAYST) shows a compositional bias: acidic residues.

Belongs to the FAM161 family.

It localises to the cytoplasm. It is found in the cytoskeleton. The protein resides in the cilium basal body. Its subcellular location is the cell projection. The protein localises to the cilium. It localises to the microtubule organizing center. It is found in the centrosome. The protein resides in the centriole. Functionally, involved in ciliogenesis. This chain is Protein FAM161A (fam161a), found in Xenopus laevis (African clawed frog).